A 362-amino-acid polypeptide reads, in one-letter code: Bifunctional chorismate mutase/prephenate dehydratase (362 aa).

Residues 3-91 form the Chorismate mutase domain; sequence QTIDELLIPH…ECLAVERPLT (89 aa). Substrate is bound by residues Arg-13, Arg-30, Lys-41, and Glu-52. Residues 92-269 form the Prephenate dehydratase domain; sequence IAYLGPQGTF…NTTRFLVMGH (178 aa). The 76-residue stretch at 281-356 folds into the ACT domain; it reads SLAVSAPNRA…RASFVKAIGS (76 aa).

The protein resides in the cytoplasm. The enzyme catalyses chorismate = prephenate. The catalysed reaction is prephenate + H(+) = 3-phenylpyruvate + CO2 + H2O. It functions in the pathway amino-acid biosynthesis; L-phenylalanine biosynthesis; phenylpyruvate from prephenate: step 1/1. Its pathway is metabolic intermediate biosynthesis; prephenate biosynthesis; prephenate from chorismate: step 1/1. In terms of biological role, catalyzes the Claisen rearrangement of chorismate to prephenate and the decarboxylation/dehydration of prephenate to phenylpyruvate. The protein is Bifunctional chorismate mutase/prephenate dehydratase (pheA) of Neisseria gonorrhoeae (strain ATCC 700825 / FA 1090).